We begin with the raw amino-acid sequence, 394 residues long: 4-O-methyl-glucuronoyl methylesterase (394 aa).

The signal sequence occupies residues 1–18 (MVHLTPALLLASAAFAAA). 3 disulfide bridges follow: Cys29–Cys63, Cys210–Cys345, and Cys242–Cys317. The short motif at 209–214 (GCSRNG) is the GXSYXG catalytic site motif element. Ser211 functions as the Nucleophile in the catalytic mechanism. Substrate contacts are provided by Lys215, Gln257, Glu265, and Trp308. The active-site Proton donor/acceptor is the His344.

It belongs to the carbohydrate esterase 15 (CE15) family.

It is found in the secreted. The enzyme catalyses a 4-O-methyl-alpha-D-glucuronosyl ester derivative + H2O = 4-O-methyl-alpha-D-glucuronate derivative + an alcohol + H(+). Glucuronoyl esterase which may play a significant role in biomass degradation, as it is considered to disconnect hemicellulose from lignin through the hydrolysis of the ester bond between 4-O-methyl-D-glucuronic acid residues of glucuronoxylans and aromatic alcohols of lignin. The protein is 4-O-methyl-glucuronoyl methylesterase of Neurospora crassa (strain ATCC 24698 / 74-OR23-1A / CBS 708.71 / DSM 1257 / FGSC 987).